Here is a 708-residue protein sequence, read N- to C-terminus: O-antigen chain terminator bifunctional methyltransferase/kinase WbdD (708 aa).

The tract at residues 1–210 is methyltransferase; that stretch reads MTKDLNTLVS…VPRPMYLVSN (210 aa). Residues 16–17, R36, G61, 82–87, 108–111, and L128 each bind S-adenosyl-L-methionine; these read YQ, DFQQEN, and GRIE. A kinase region spans residues 211–459; the sequence is HRVLINDFNQ…AKLPSAEQQR (249 aa). ATP-binding positions include P229, H237, 241 to 243, K252, E274, 309 to 311, M358, and D369; these read RRY and EKL. Residues 485 to 594 are a coiled coil; sequence AGSEALRGQI…EIEKIHRSRS (110 aa). Positions 601 to 669 are required for membrane-binding; it reads YRYLGLQIHL…RLYRRMNPLP (69 aa). Residues 687–708 are required for localizing WbdA to the membrane; it reads VMHPELLPPEVYEIYLKLTKNK.

This sequence belongs to the WbdD family. Homotrimer in solution. Interacts with WbdA.

Its subcellular location is the cell inner membrane. The enzyme catalyses 3-O-phospho-alpha-D-Man-(1-&gt;2)-alpha-D-Man-(1-&gt;2)-[alpha-D-Man-(1-&gt;3)-alpha-D-Man-(1-&gt;3)-alpha-D-Man-(1-&gt;2)-alpha-D-Man-(1-&gt;2)](n)-alpha-D-Man-(1-&gt;3)-alpha-D-Man-(1-&gt;3)-alpha-D-Man-(1-&gt;3)-alpha-D-GlcNAc-di-trans,octa-cis-undecaprenyl diphosphate + S-adenosyl-L-methionine = 3-O-methylphospho-alpha-D-Man-(1-&gt;2)-alpha-D-Man-(1-&gt;2)-[alpha-D-Man-(1-&gt;3)-alpha-D-Man-(1-&gt;3)-alpha-D-Man-(1-&gt;2)-alpha-D-Man-(1-&gt;2)](n)-alpha-D-Man-(1-&gt;3)-alpha-D-Man-(1-&gt;3)-alpha-D-Man-(1-&gt;3)-alpha-D-GlcNAc-di-trans,octa-cis-undecaprenyl diphosphate + S-adenosyl-L-homocysteine. The catalysed reaction is alpha-D-Man-(1-&gt;2)-alpha-D-Man-(1-&gt;2)-[alpha-D-Man-(1-&gt;3)-alpha-D-Man-(1-&gt;3)-alpha-D-Man-(1-&gt;2)-alpha-D-Man-(1-&gt;2)](n)-alpha-D-Man-(1-&gt;3)-alpha-D-Man-(1-&gt;3)-alpha-D-Man-(1-&gt;3)-alpha-D-GlcNAc-di-trans,octa-cis-undecaprenyl diphosphate + ATP = 3-O-phospho-alpha-D-Man-(1-&gt;2)-alpha-D-Man-(1-&gt;2)-[alpha-D-Man-(1-&gt;3)-alpha-D-Man-(1-&gt;3)-alpha-D-Man-(1-&gt;2)-alpha-D-Man-(1-&gt;2)](n)-alpha-D-Man-(1-&gt;3)-alpha-D-Man-(1-&gt;3)-alpha-D-Man-(1-&gt;3)-alpha-D-GlcNAc-di-trans,octa-cis-undecaprenyl diphosphate + ADP + H(+). Its pathway is bacterial outer membrane biogenesis; LPS O-antigen biosynthesis. Regulates the length of the LPS O-antigen polysaccharide chain. Stops the polymerization of the chain by phosphorylating and then methylating the phosphate on the terminal sugar. This terminal modification is essential for export of the O-antigen across the inner membrane. WbdD is also required for correct localization of the WbdA mannosyltransferase. In Escherichia coli, this protein is O-antigen chain terminator bifunctional methyltransferase/kinase WbdD.